Reading from the N-terminus, the 317-residue chain is MKI67 FHA domain-interacting nucleolar phosphoprotein (317 aa).

Alanine 2 is subject to N-acetylalanine. A Glycyl lysine isopeptide (Lys-Gly) (interchain with G-Cter in SUMO2) cross-link involves residue lysine 40. One can recognise an RRM domain in the interval glycine 47–arginine 125. Omega-N-methylarginine is present on arginine 116. Residues lysine 181 and lysine 194 each participate in a glycyl lysine isopeptide (Lys-Gly) (interchain with G-Cter in SUMO2) cross-link. Arginine 203 carries the citrulline modification. The tract at residues arginine 203 to glutamine 317 is disordered. Residues aspartate 213–isoleucine 233 are compositionally biased toward basic and acidic residues. Phosphoserine is present on serine 219. A compositionally biased stretch (basic residues) spans proline 238–lysine 248. At serine 253 the chain carries Phosphoserine. A phosphothreonine mark is found at threonine 257 and threonine 261. The span at leucine 265–isoleucine 284 shows a compositional bias: basic and acidic residues. Residues arginine 267 and arginine 268 each carry the omega-N-methylated arginine modification. Phosphoserine is present on serine 270. Lysine 293 is covalently cross-linked (Glycyl lysine isopeptide (Lys-Gly) (interchain with G-Cter in SUMO1); alternate). A Glycyl lysine isopeptide (Lys-Gly) (interchain with G-Cter in SUMO2); alternate cross-link involves residue lysine 293. Phosphothreonine is present on threonine 301. Basic residues predominate over residues lysine 308–glutamine 317.

As to quaternary structure, binds to the FHA domain of MKI67; this interaction is enhanced in mitosis. Phosphorylated. Post-translationally, citrullinated by PADI4. As to expression, expressed in brain, heart, hind limb muscles, intestine, liver, skin and spleen.

It localises to the nucleus. The protein localises to the nucleolus. It is found in the chromosome. This chain is MKI67 FHA domain-interacting nucleolar phosphoprotein (Nifk), found in Mus musculus (Mouse).